The primary structure comprises 648 residues: cAMP-dependent protein kinase catalytic subunit (648 aa).

4 stretches are compositionally biased toward low complexity: residues 1 to 20 (MSNSNNNSSSGNHNSTTINN), 46 to 67 (SGNNTNNNNTNNNNNNNNNSSG), 136 to 175 (QQQPQQQPQQQQPQQQQPQQQQPQQQQQQQPQQQQQPQQQ), and 232 to 254 (NTPSTTQTSTTTTTTTTTTNPHT). Disordered stretches follow at residues 1–25 (MSNSNNNSSSGNHNSTTINNPKVNV), 40–86 (GGGG…TKMD), 121–175 (KVPS…PQQQ), and 219–290 (QQQQ…DTNP). Residues 255–290 (SGLSLQHAHSSYTPSNVLHSPTHFQSSLPTRLDTNP) are compositionally biased toward polar residues. The region spanning 336–590 (FKQIRVIGTG…ALDVKNHRWF (255 aa)) is the Protein kinase domain. ATP-binding positions include 342 to 350 (IGTGTFGKV) and Lys-365. The active-site Proton acceptor is Asp-459. Thr-490 carries the post-translational modification Phosphothreonine. Residues 591–648 (SDINWERLYQRRDNGPFIPKIQHQGDSSNFEMYDEEEMVEEPPSSNYVDPYAHLFKDF) enclose the AGC-kinase C-terminal domain.

The protein belongs to the protein kinase superfamily. AGC Ser/Thr protein kinase family. cAMP subfamily. In Dictyostelium the holoenzyme is a dimer composed of a regulatory (R) and a catalytic (C) subunit. In the presence of cAMP it dissociates into the active C subunit and an R monomer.

The enzyme catalyses L-seryl-[protein] + ATP = O-phospho-L-seryl-[protein] + ADP + H(+). The catalysed reaction is L-threonyl-[protein] + ATP = O-phospho-L-threonyl-[protein] + ADP + H(+). Essential for differentiation and fruit morphogenesis. The chain is cAMP-dependent protein kinase catalytic subunit (pkaC) from Dictyostelium discoideum (Social amoeba).